The following is a 618-amino-acid chain: Keratin, type I cytoskeletal 9 (618 aa).

Residues 1–49 (MSFRQISSSFRSSSGSSCGGGGGRGASRGSMRSSFGRSSRAGGESRFGS) are disordered. The head stretch occupies residues 1-137 (MSFRQISSSF…GGEGSILNTN (137 aa)). The segment covering 7-16 (SSSFRSSSGS) has biased composition (low complexity). Phosphoserine is present on residues serine 14 and serine 17. Gly residues predominate over residues 17 to 26 (SCGGGGGRGA). A compositionally biased stretch (low complexity) spans 27-49 (SRGSMRSSFGRSSRAGGESRFGS). Residues 138-173 (EKVVMQNLNSRLASYMDKVQELEEDNANLEKQIQEW) are coil 1A. The IF rod domain occupies 138-450 (EKVVMQNLNS…KLLEGGQQDF (313 aa)). Residues 174–192 (YSRKGNRVFQKDYSHYYNT) form a linker 1 region. Residues 193–284 (IEDLKDRIVD…KSHKEEMNQL (92 aa)) are coil 1B. The tract at residues 285–307 (TGLNDGDVNVEINVAPSTDLTQV) is linker 12. Residues 308 to 446 (LNDMREEYEH…ETYRKLLEGG (139 aa)) are coil 2. The tract at residues 447 to 609 (QQDFESSGAG…GGGNTRPSQS (163 aa)) is tail. The tract at residues 449 to 618 (DFESSGAGQI…SQSSQIPRLR (170 aa)) is disordered. Residues 456–603 (GQIGFGSGKG…GSGGSYGGGN (148 aa)) show a composition bias toward gly residues. The span at 607–618 (SQSQSSQIPRLR) shows a compositional bias: low complexity.

Belongs to the intermediate filament family. As to quaternary structure, heterotetramer of two type I and two type II keratins. In terms of tissue distribution, expressed in the perinuclear ring of spermatid manchettes within testis and in keratinocytes of the suprabasal layer of footpad epidermis (at protein level).

In terms of biological role, may serve an important special function either in the mature palmar and plantar skin tissue or in the morphogenetic program of the formation of these tissues. Plays a role in keratin filament assembly. May be involved in spermatid nuclear shaping and sperm development. The polypeptide is Keratin, type I cytoskeletal 9 (Krt9) (Rattus norvegicus (Rat)).